We begin with the raw amino-acid sequence, 1642 residues long: Mitochondrial 3' processome subunit 2 (1642 aa).

The N-terminal 27 residues, 1–27 (MGLPFLCHTRVCLFSNKIPFVLCGSRF), are a transit peptide targeting the mitochondrion. Disordered stretches follow at residues 43–69 (ETLN…PQKK) and 745–772 (KGEK…LSGP). Positions 49–65 (ELSSPSTSKEPSVGSDS) are enriched in polar residues.

In terms of assembly, component of the mitochondrial 3' processome (MPsome) complex composed at least of terminal uridylyltransferase KRET1/TUT1, 3'-5' exonuclease DSS1, MPSS1, MPSS2 and MPSS3. Within the complex, interacts with DSS1.

It is found in the mitochondrion. In terms of biological role, as part of the mitochondrial 3' processome (MPsome), involved in the maturation of guided RNA (gRNA) precursors. In Trypanosoma brucei brucei, this protein is Mitochondrial 3' processome subunit 2.